A 251-amino-acid polypeptide reads, in one-letter code: Pyridoxine 5'-phosphate synthase (251 aa).

Asparagine 7 provides a ligand contact to 3-amino-2-oxopropyl phosphate. 9 to 10 (DH) provides a ligand contact to 1-deoxy-D-xylulose 5-phosphate. Arginine 18 lines the 3-amino-2-oxopropyl phosphate pocket. Histidine 43 acts as the Proton acceptor in catalysis. 2 residues coordinate 1-deoxy-D-xylulose 5-phosphate: arginine 45 and histidine 50. Catalysis depends on glutamate 70, which acts as the Proton acceptor. Threonine 100 contacts 1-deoxy-D-xylulose 5-phosphate. Residue histidine 198 is the Proton donor of the active site. 3-amino-2-oxopropyl phosphate is bound by residues alanine 199 and 220-221 (GH).

Belongs to the PNP synthase family. In terms of assembly, homooctamer; tetramer of dimers.

It localises to the cytoplasm. The enzyme catalyses 3-amino-2-oxopropyl phosphate + 1-deoxy-D-xylulose 5-phosphate = pyridoxine 5'-phosphate + phosphate + 2 H2O + H(+). It participates in cofactor biosynthesis; pyridoxine 5'-phosphate biosynthesis; pyridoxine 5'-phosphate from D-erythrose 4-phosphate: step 5/5. Catalyzes the complicated ring closure reaction between the two acyclic compounds 1-deoxy-D-xylulose-5-phosphate (DXP) and 3-amino-2-oxopropyl phosphate (1-amino-acetone-3-phosphate or AAP) to form pyridoxine 5'-phosphate (PNP) and inorganic phosphate. The polypeptide is Pyridoxine 5'-phosphate synthase (Aromatoleum aromaticum (strain DSM 19018 / LMG 30748 / EbN1) (Azoarcus sp. (strain EbN1))).